A 110-amino-acid polypeptide reads, in one-letter code: Endoribonuclease SymE (110 aa).

In terms of domain architecture, SpoVT-AbrB spans 29 to 74 (SRYPEYTRIPAITLKGQWLEDAGFTTGTQVDVRVMNGCIVLTAQQP).

This sequence belongs to the SymE family.

The protein localises to the cytoplasm. Functionally, involved in the degradation and recycling of damaged RNA. It is itself a target for degradation by the ATP-dependent protease Lon. The chain is Endoribonuclease SymE from Salmonella paratyphi C (strain RKS4594).